A 542-amino-acid polypeptide reads, in one-letter code: Trans-alpha-bergamotene synthase (542 aa).

Residues Asp-295, Asp-299, Asp-439, Thr-443, and Glu-447 each contribute to the Mg(2+) site. Residues 295 to 299 (DDFYD) carry the DDXXD motif motif.

This sequence belongs to the terpene synthase family. The cofactor is Mg(2+).

The enzyme catalyses (2E,6E)-farnesyl diphosphate = (1S,5S,6R)-alpha-bergamotene + diphosphate. Its pathway is secondary metabolite biosynthesis; terpenoid biosynthesis. Sesquiterpene synthase converting farnesyl diphosphate to trans-alpha-bergamotene as the major product. The sequence is that of Trans-alpha-bergamotene synthase from Phyla dulcis (Aztec sweet herb).